The chain runs to 452 residues: Pup--protein ligase (452 aa).

Residue Glu-9 participates in Mg(2+) binding. Arg-53 serves as a coordination point for ATP. Residue Tyr-55 coordinates Mg(2+). The active-site Proton acceptor is Asp-57. Glu-63 is a Mg(2+) binding site. Positions 66 and 419 each coordinate ATP.

The protein belongs to the Pup ligase/Pup deamidase family. Pup-conjugating enzyme subfamily.

It catalyses the reaction ATP + [prokaryotic ubiquitin-like protein]-L-glutamate + [protein]-L-lysine = ADP + phosphate + N(6)-([prokaryotic ubiquitin-like protein]-gamma-L-glutamyl)-[protein]-L-lysine.. It participates in protein degradation; proteasomal Pup-dependent pathway. The protein operates within protein modification; protein pupylation. Its function is as follows. Catalyzes the covalent attachment of the prokaryotic ubiquitin-like protein modifier Pup to the proteasomal substrate proteins, thereby targeting them for proteasomal degradation. This tagging system is termed pupylation. The ligation reaction involves the side-chain carboxylate of the C-terminal glutamate of Pup and the side-chain amino group of a substrate lysine. This Rhodococcus jostii (strain RHA1) protein is Pup--protein ligase.